The primary structure comprises 198 residues: Recombination protein RecR (198 aa).

The C4-type zinc-finger motif lies at 57–72; that stretch reads CSVCGNLTDEDPCAIC. One can recognise a Toprim domain in the interval 80–175; that stretch reads STILIVEDSR…KVTRLARGLA (96 aa).

The protein belongs to the RecR family.

In terms of biological role, may play a role in DNA repair. It seems to be involved in an RecBC-independent recombinational process of DNA repair. It may act with RecF and RecO. This is Recombination protein RecR from Streptococcus sanguinis (strain SK36).